The chain runs to 205 residues: Thymidylate kinase (205 aa).

7–14 (GIDGSGKT) serves as a coordination point for ATP.

It belongs to the thymidylate kinase family.

The enzyme catalyses dTMP + ATP = dTDP + ADP. Phosphorylation of dTMP to form dTDP in both de novo and salvage pathways of dTTP synthesis. In Wolbachia pipientis subsp. Culex pipiens (strain wPip), this protein is Thymidylate kinase.